A 117-amino-acid chain; its full sequence is MDDDFLFMTLLYDFYGALLTDKQREIFEMYYLNDYSLGEISELLDISRQGVYDTLKRAESSLEFFEEKLGLVKRHQEIMNKLDKIKKGIEIIRERERDPEILKIIEEIAREIEELNP.

This sequence belongs to the UPF0122 family.

Functionally, might take part in the signal recognition particle (SRP) pathway. This is inferred from the conservation of its genetic proximity to ftsY/ffh. May be a regulatory protein. This chain is UPF0122 protein Teth39_1278, found in Thermoanaerobacter pseudethanolicus (strain ATCC 33223 / 39E) (Clostridium thermohydrosulfuricum).